The primary structure comprises 394 residues: Ribulose bisphosphate carboxylase large chain (394 aa).

K5 bears the N6,N6,N6-trimethyllysine mark. Residues N114 and T164 each coordinate substrate. K166 functions as the Proton acceptor in the catalytic mechanism. K168 is a binding site for substrate. Mg(2+)-binding residues include K192, D194, and E195. An N6-carboxylysine modification is found at K192. H285 acts as the Proton acceptor in catalysis. Substrate-binding residues include R286, H318, and S370.

The protein belongs to the RuBisCO large chain family. Type I subfamily. In terms of assembly, heterohexadecamer of 8 large chains and 8 small chains. Mg(2+) serves as cofactor.

It is found in the plastid. The protein localises to the chloroplast. The catalysed reaction is 2 (2R)-3-phosphoglycerate + 2 H(+) = D-ribulose 1,5-bisphosphate + CO2 + H2O. It catalyses the reaction D-ribulose 1,5-bisphosphate + O2 = 2-phosphoglycolate + (2R)-3-phosphoglycerate + 2 H(+). Its function is as follows. RuBisCO catalyzes two reactions: the carboxylation of D-ribulose 1,5-bisphosphate, the primary event in carbon dioxide fixation, as well as the oxidative fragmentation of the pentose substrate in the photorespiration process. Both reactions occur simultaneously and in competition at the same active site. This chain is Ribulose bisphosphate carboxylase large chain (rbcL), found in Nymphaea odorata (White water lily).